Here is a 278-residue protein sequence, read N- to C-terminus: Shikimate dehydrogenase (NADP(+)) (278 aa).

Shikimate contacts are provided by residues 19-21 and Thr-66; that span reads SRS. Catalysis depends on Lys-70, which acts as the Proton acceptor. Shikimate contacts are provided by Asn-91 and Asp-106. NADP(+) contacts are provided by residues 129–133 and Phe-221; that span reads GAGGA. Tyr-223 contacts shikimate. Gly-242 provides a ligand contact to NADP(+).

It belongs to the shikimate dehydrogenase family. Homodimer.

It carries out the reaction shikimate + NADP(+) = 3-dehydroshikimate + NADPH + H(+). It participates in metabolic intermediate biosynthesis; chorismate biosynthesis; chorismate from D-erythrose 4-phosphate and phosphoenolpyruvate: step 4/7. Involved in the biosynthesis of the chorismate, which leads to the biosynthesis of aromatic amino acids. Catalyzes the reversible NADPH linked reduction of 3-dehydroshikimate (DHSA) to yield shikimate (SA). The sequence is that of Shikimate dehydrogenase (NADP(+)) from Anaeromyxobacter dehalogenans (strain 2CP-1 / ATCC BAA-258).